Consider the following 757-residue polypeptide: DNA endonuclease RBBP8 (757 aa).

Residues 22 to 45 (DLWTKLKEYHDKETQGLQVKVTKL) form an essential for binding to the MRN complex and for RPA focus formation on DNA damage region. A coiled-coil region spans residues 35 to 84 (TQGLQVKVTKLKKERILDAQRLEEFFTKNQQLREQQKVLHETIKVLEDRL). A required for interaction with LMO4, probably by stabilizing the interaction through RPPB8 dimerization region spans residues 45–160 (LKKERILDAQ…TDLESEEDVI (116 aa)). Glycyl lysine isopeptide (Lys-Gly) (interchain with G-Cter in SUMO2) cross-links involve residues Lys62 and Lys115. Residues 117–138 (ITELMNEKNTLQEENKKLSEQL) are a coiled coil. Lys193 is covalently cross-linked (Glycyl lysine isopeptide (Lys-Gly) (interchain with G-Cter in SUMO2)). A Phosphoserine modification is found at Ser272. Thr309 carries the phosphothreonine modification. Ser320, Ser321, and Ser343 each carry phosphoserine. The interval 348 to 375 (GKKTHLKTVPLSNTSAPGPEKPRSKSED) is disordered. Residues Lys354 and Lys372 each participate in a glycyl lysine isopeptide (Lys-Gly) (interchain with G-Cter in SUMO2) cross-link. Residue Ser373 is modified to Phosphoserine. Residues Lys390, Lys399, and Lys405 each participate in a glycyl lysine isopeptide (Lys-Gly) (interchain with G-Cter in SUMO2) cross-link. A compositionally biased stretch (polar residues) spans 407–417 (TSEPISEQGNI). A disordered region spans residues 407 to 430 (TSEPISEQGNIGHSKDTDRDKHVV). Basic and acidic residues predominate over residues 419–429 (HSKDTDRDKHV). Glycyl lysine isopeptide (Lys-Gly) (interchain with G-Cter in SUMO2) cross-links involve residues Lys433 and Lys443. The interval 484–488 (PLDLS) is PXDLS motif. The PXDLS motif signature appears at 484–488 (PLDLS). Positions 503–551 (CENSKIRFRQVTLYEALKPIPRDSSSSRKALSGSCGLTKDSPEEPCLQE) are damage-recruitment motif. A Glycyl lysine isopeptide (Lys-Gly) (interchain with G-Cter in SUMO2); alternate cross-link involves residue Lys520. The segment at 524-544 (RDSSSSRKALSGSCGLTKDSP) is disordered. Residues Lys564 and Lys570 each participate in a glycyl lysine isopeptide (Lys-Gly) (interchain with G-Cter in SUMO2) cross-link. Lys596 participates in a covalent cross-link: Glycyl lysine isopeptide (Lys-Gly) (interchain with G-Cter in SUMO2); alternate. Residues Lys605, Lys630, and Lys632 each participate in a glycyl lysine isopeptide (Lys-Gly) (interchain with G-Cter in SUMO2) cross-link. The tract at residues 633–677 (SLQNNQDVSFENIQWSIDPGADLSQYKMGVTVDDTKDGSQSRLAG) is required for interaction with LMO4, probably by making physical contact with LMO4. Ser656 is modified (phosphoserine; by ATM). Residue Lys668 forms a Glycyl lysine isopeptide (Lys-Gly) (interchain with G-Cter in SUMO2) linkage. Position 671 is a phosphoserine (Ser671). Basic and acidic residues predominate over residues 696 to 728 (KKQEQKGEESPNGERKMNDSLEDMFDRTTHEEY). A disordered region spans residues 696–757 (KKQEQKGEES…TTTKKPNISW (62 aa)). A Glycyl lysine isopeptide (Lys-Gly) (interchain with G-Cter in SUMO2) cross-link involves residue Lys711. Ser715 bears the Phosphoserine mark. A compositionally biased stretch (polar residues) spans 747-757 (STTTKKPNISW).

It belongs to the COM1/SAE2/CtIP family. As to quaternary structure, homotetramer; formed by antiparallel association of helical extensions protruding from the N-termini of two parallel coiled-coil dimers. Forms a dumbbell-shaped particle in which polar globular domains are held about 30 nm apart by a central rod. Homotetramerization is required for DNA-end resection and repair. Interacts (via the PXDLS motif) with CTBP1; the interaction is disrupted via binding of the adenovirus E1A to CTBP1. Component of the BRCA1-RBBP8 complex. Interacts (the Ser-321 phosphorylated form) with BRCA1 (via the C-terminal BRCT domains): the interaction occurs in the G2 phase, ubiquitinates RBBP8 and involves RBBP8 in BRCA1-dependent G2/M checkpoint control on DNA damage. Interacts with RB1. Interacts with the MRN complex. Interacts directly with MRE11; the interaction is required for efficient homologous recombination (HR) and regulation of the MRN complex. Interacts directly with RAD50. Interacts (when phosphorylated by CDK1) with NBN; promoting association with the MRN complex. Interacts with LMO4 (via the LIM zinc-binding 1 domain). Interacts with SIAH1. Interacts with RNF138. Interacts with EXD2. Interacts with CUL3 and KLHL15; this interaction leads to RBBP8 proteasomal degradation. Directly interacts with PIN1; this interaction depends upon RBBP8 phosphorylation, predominantly at Thr-309. Interacts with FZR1; this interaction leads to APC/C-mediated RBBP8 proteasomal degradation. Interacts with AUNIP; leading to recruit RBBP8 to sites of DNA damage. Interacts with SAMHD1. Interacts with HDGFL2. In terms of processing, hyperphosphorylation upon ionizing radiation results in dissociation from BRCA1. Phosphorylation by CDK1 is essential for the recruitment to DNA and the DNA repair function. Phosphorylated on Ser-321 as cells enter G2 phase. This phosphorylation is required for binding BRCA1 and for the G2/M DNA damage transition checkpoint control. Phosphorylation at Thr-309, probably catalyzed by CDK2, is required for PIN1-binding, while phosphorylation at Ser-272 serves as a PIN1 isomerization site. Phosphorylation at Thr-309 is cell-cycle dependent. It steadily increases during S phase, peaks at late S/G2 phase, and drops at G1. Phosphorylation is not required for tetramerization. Binds to DNA more strongly when dephosphorylated. Ubiquitinated. Ubiquitination at multiple sites by BRCA1 (via its N-terminal RING domain) does not lead to its proteasomal degradation but instead the ubiquitinated RBBP8 binds to chromatin following DNA damage and may play a role in G2/M checkpoint control. Ubiquitinated by RNF138 at its N-terminus. Ubiquitinated through 'Lys-48' by the E3 CUL3-KLHL15 complex; this modification leads to proteasomal degradation. Ubiquitinated by the E3 FZR1/APC/C complex; this modification leads to proteasomal degradation.

The protein resides in the nucleus. Its subcellular location is the chromosome. In terms of biological role, endonuclease that cooperates with the MRE11-RAD50-NBN (MRN) complex in DNA-end resection, the first step of double-strand break (DSB) repair through the homologous recombination (HR) pathway. HR is restricted to S and G2 phases of the cell cycle and preferentially repairs DSBs resulting from replication fork collapse. Key determinant of DSB repair pathway choice, as it commits cells to HR by preventing classical non-homologous end-joining (NHEJ). Specifically promotes the endonuclease activity of the MRN complex to clear DNA ends containing protein adducts: recruited to DSBs by NBN following phosphorylation by CDK1, and promotes the endonuclease activity of MRE11 to clear protein-DNA adducts and generate clean double-strand break ends. Functions downstream of the MRN complex and ATM, promotes ATR activation and its recruitment to DSBs in the S/G2 phase facilitating the generation of ssDNA. Component of the BRCA1-RBBP8 complex that regulates CHEK1 activation and controls cell cycle G2/M checkpoints on DNA damage. During immunoglobulin heavy chain class-switch recombination, promotes microhomology-mediated alternative end joining (A-NHEJ) and plays an essential role in chromosomal translocations. Binds preferentially to DNA Y-junctions and to DNA substrates with blocked ends and promotes intermolecular DNA bridging. This Bos taurus (Bovine) protein is DNA endonuclease RBBP8 (RBBP8).